The following is a 171-amino-acid chain: MEIILIKPVRKLGKIGDILKVADGFGRNYLLPQKLAIRATEPNKELIVKQKHEFEAKDKQIREEVEKINALIKDQQLVFIRQTSNDGKLFGSVTNKEIADKLSENISYNISHSNIILDKQIKSTGIYTVEIRLHAELNAIVTVIVARSESEAQDYLREQKTETSEDLAESA.

The protein belongs to the bacterial ribosomal protein bL9 family.

Binds to the 23S rRNA. The protein is Large ribosomal subunit protein bL9 of Rickettsia peacockii (strain Rustic).